We begin with the raw amino-acid sequence, 431 residues long: Glutamate--tRNA ligase 2 (431 aa).

The short motif at 6-16 is the 'HIGH' region element; it reads PSPTGDMHIGN. The 'KMSKS' region motif lies at 235–239; the sequence is KMSKR. Lys238 lines the ATP pocket.

It belongs to the class-I aminoacyl-tRNA synthetase family. Glutamate--tRNA ligase type 1 subfamily. Monomer.

It localises to the cytoplasm. The enzyme catalyses tRNA(Glu) + L-glutamate + ATP = L-glutamyl-tRNA(Glu) + AMP + diphosphate. Functionally, catalyzes the attachment of glutamate to tRNA(Glu) in a two-step reaction: glutamate is first activated by ATP to form Glu-AMP and then transferred to the acceptor end of tRNA(Glu). The chain is Glutamate--tRNA ligase 2 from Campylobacter jejuni subsp. doylei (strain ATCC BAA-1458 / RM4099 / 269.97).